The following is a 484-amino-acid chain: MPGTSVSDLSTATAVDAPALLPLPVARPSAPAVVRGKLYIKTHGCQMNEYDSAKMADVLAASEGLELTDNPEEADVVLVNTCSIREKAQEKVFSQLGRWKALKAGGKPVIIGVGGCVASQEGEAIVKRAPYVDLVFGPQTLHRLPELIRARRESGKSQVDISFPEIEKFDRLPEPRAEGPSAFVSIMEGCSKYCSFCVVPYTRGEEVSRPFEDVLVEVAQLAAQGVREINLLGQNVNAYRGAYGADAGDPAQYADLGLLIRTIAQIEGIGRIRFTTSHPLEFSDSLVDAYRDVPQLANCLHLPVQAGSDRILSAMKRGYTALEFKSRIRKLRAVRPDISISSDFIVGFPGETEADFEKTMKLIEDVGFDQSFSFVYSRRPGTPASDLQDDTPETVKQARLARLQAHISAHAASISQSMVGSVQRVLVEGPSRRDPNELTGKSENMRPVNFPGNPRLIGQFVDVLITEAMSNSLRGRIQLDDSAH.

The MTTase N-terminal domain maps to 36–153; sequence GKLYIKTHGC…LPELIRARRE (118 aa). Positions 45, 82, 116, 190, 194, and 197 each coordinate [4Fe-4S] cluster. The 240-residue stretch at 176–415 folds into the Radical SAM core domain; that stretch reads RAEGPSAFVS…HISAHAASIS (240 aa). The TRAM domain occupies 416–479; it reads QSMVGSVQRV…SNSLRGRIQL (64 aa). The tract at residues 428-450 is disordered; it reads EGPSRRDPNELTGKSENMRPVNF.

Belongs to the methylthiotransferase family. MiaB subfamily. Monomer. It depends on [4Fe-4S] cluster as a cofactor.

The protein localises to the cytoplasm. The enzyme catalyses N(6)-dimethylallyladenosine(37) in tRNA + (sulfur carrier)-SH + AH2 + 2 S-adenosyl-L-methionine = 2-methylsulfanyl-N(6)-dimethylallyladenosine(37) in tRNA + (sulfur carrier)-H + 5'-deoxyadenosine + L-methionine + A + S-adenosyl-L-homocysteine + 2 H(+). Functionally, catalyzes the methylthiolation of N6-(dimethylallyl)adenosine (i(6)A), leading to the formation of 2-methylthio-N6-(dimethylallyl)adenosine (ms(2)i(6)A) at position 37 in tRNAs that read codons beginning with uridine. The protein is tRNA-2-methylthio-N(6)-dimethylallyladenosine synthase of Xanthomonas oryzae pv. oryzae (strain PXO99A).